Consider the following 263-residue polypeptide: Leukocyte-associated immunoglobulin-like receptor 1 (263 aa).

The N-terminal stretch at 1–21 (MPLHSVIVLVLVLCLGWKSNT) is a signal peptide. Residues 27–112 (SDFTICAEPG…VWSQRSNDLQ (86 aa)) form the Ig-like C2-type domain. C49 and C96 are joined by a disulfide. The N-linked (GlcNAc...) asparagine glycan is linked to N87. Residues 144–164 (ILTVVSVIFLLCLSLFLFCFL) form a helical membrane-spanning segment. 2 consecutive short sequence motifs (ITIM motif) follow at residues 225–230 (VTYAQL) and 255–260 (STYAAI). A phosphotyrosine mark is found at Y227 and Y257.

Interacts with SH2 domains of tyrosine-protein phosphatases PTPN6 and PTPN11. The interaction with PTPN6 is constitutive. Interacts with the SH2 domain of CSK. Binds with high affinity to extracellular matrix collagens, the interaction is functionally important. In terms of processing, phosphorylation at Tyr-227 and Tyr-257 activates it. May be phosphorylated by LCK. Post-translationally, N-glycosylated. In terms of tissue distribution, expressed in lymphoid and non-lymphoid organs.

The protein localises to the membrane. Functionally, functions as an inhibitory receptor that plays a constitutive negative regulatory role on cytolytic function of natural killer (NK) cells, B-cells and T-cells. Activation by Tyr phosphorylation results in recruitment and activation of the phosphatases PTPN6 and PTPN11. It also reduces the increase of intracellular calcium evoked by B-cell receptor ligation. May also play its inhibitory role independently of SH2-containing phosphatases. Modulates cytokine production in CD4+ T-cells, down-regulating IL2 and IFNG production while inducing secretion of transforming growth factor beta. Also down-regulates IgG and IgE production in B-cells as well as IL8, IL10 and TNF secretion. Inhibits proliferation and induces apoptosis in myeloid leukemia cell lines as well as prevents nuclear translocation of NF-kappa-B p65 subunit/RELA and phosphorylation of I-kappa-B alpha/CHUK in these cells. Inhibits the differentiation of peripheral blood precursors towards dendritic cells. In Rattus norvegicus (Rat), this protein is Leukocyte-associated immunoglobulin-like receptor 1 (Lair1).